Here is a 1269-residue protein sequence, read N- to C-terminus: Regulator of nonsense transcripts 2 (1269 aa).

Disordered stretches follow at residues 1-125 and 143-162; these read MPAE…EKEE and LRSKNQNAPDNRPEENFFSR. The stretch at 57 to 133 forms a coiled coil; it reads KKRLEEDKRK…EESLQLHQEA (77 aa). The segment at 94 to 132 is sufficient for interaction with UPF1; it reads KKKQEEEERKKQEEQAKRQQEEAAAQLKEKEESLQLHQE. The 229-residue stretch at 168–396 folds into the MIF4G 1 domain; sequence KKNTAFVKKL…KGELSEDRHK (229 aa). Disordered regions lie at residues 422-444 and 487-518; these read NMPDLPQDKPTPEEHGPGIDIFT and KSQNKDSNKDDSKEAKEPKDNKEASSPDDLEL. 2 stretches are compositionally biased toward basic and acidic residues: residues 427 to 438 and 487 to 511; these read PQDKPTPEEHGP and KSQNKDSNKDDSKEAKEPKDNKEAS. MIF4G domains are found at residues 571 to 755 and 774 to 984; these read QQLP…YCNP and RKLL…LRPK. The interval 709–926 is sufficient for interaction with UPF3A and UPF3B; the sequence is GRFLFRSPES…IRLVCTILDT (218 aa). A sufficient for interaction with EIF4A1 and EIF1 region spans residues 755–1269; sequence PPPAEKTVRK…LIFKTGGRRR (515 aa). The interval 837 to 857 is binds to UPF3B; that stretch reads EDVGIHVVDGVLEDIRLGMEV. Residues 1017–1090 are disordered; it reads SKDSMTEGEN…KENETDEENA (74 aa). Positions 1025–1073 are enriched in acidic residues; it reads ENLEEDEEEEEGGAETEEQSGNESEVNEPEEEEGSEEEEEGEEEEEENT. Residues 1081–1269 are sufficient for interaction with UPF1 C-terminus; the sequence is KENETDEENA…LIFKTGGRRR (189 aa). Thr-1085 bears the Phosphothreonine mark. Interaction with UPF1 regions lie at residues 1102–1126 and 1164–1204; these read VPCVEDEDFIQALDKMMLENLQQRS and DTMP…AEQE. Positions 1102-1195 are necessary for interaction with UPF1; the sequence is VPCVEDEDFI…PMSSQLAANH (94 aa). Residues 1218-1269 are disordered; sequence ERQEQEDYQEMLQSLAQRPAPANTNRERRPRYQHPKGAPNADLIFKTGGRRR.

As to quaternary structure, found in a post-splicing messenger ribonucleoprotein (mRNP) complex. Associates with the exon junction complex (EJC). Interacts with SMG1, EST1A, UPF3A, UPF3B, EIF4A1 and EIF1. Interacts with UPF1; interaction is promoted by TDRD6. Interacts with DDX4. Localized in male germ cells.

The protein localises to the cytoplasm. Its subcellular location is the perinuclear region. Its function is as follows. Involved in nonsense-mediated decay (NMD) of mRNAs containing premature stop codons by associating with the nuclear exon junction complex (EJC). Recruited by UPF3B associated with the EJC core at the cytoplasmic side of the nuclear envelope and the subsequent formation of an UPF1-UPF2-UPF3 surveillance complex (including UPF1 bound to release factors at the stalled ribosome) is believed to activate NMD. In cooperation with UPF3B stimulates both ATPase and RNA helicase activities of UPF1. Binds spliced mRNA. This Mus musculus (Mouse) protein is Regulator of nonsense transcripts 2.